The sequence spans 238 residues: 2-C-methyl-D-erythritol 4-phosphate cytidylyltransferase (238 aa).

The protein belongs to the IspD/TarI cytidylyltransferase family. IspD subfamily.

It carries out the reaction 2-C-methyl-D-erythritol 4-phosphate + CTP + H(+) = 4-CDP-2-C-methyl-D-erythritol + diphosphate. Its pathway is isoprenoid biosynthesis; isopentenyl diphosphate biosynthesis via DXP pathway; isopentenyl diphosphate from 1-deoxy-D-xylulose 5-phosphate: step 2/6. Catalyzes the formation of 4-diphosphocytidyl-2-C-methyl-D-erythritol from CTP and 2-C-methyl-D-erythritol 4-phosphate (MEP). The protein is 2-C-methyl-D-erythritol 4-phosphate cytidylyltransferase of Salinibacter ruber (strain DSM 13855 / M31).